Consider the following 277-residue polypeptide: Thiazole synthase (277 aa).

Lysine 107 (schiff-base intermediate with DXP) is an active-site residue. 1-deoxy-D-xylulose 5-phosphate contacts are provided by residues glycine 168, 194–195 (AG), and 216–217 (AS).

This sequence belongs to the ThiG family. Homotetramer. Forms heterodimers with either ThiH or ThiS.

The protein localises to the cytoplasm. It carries out the reaction [ThiS sulfur-carrier protein]-C-terminal-Gly-aminoethanethioate + 2-iminoacetate + 1-deoxy-D-xylulose 5-phosphate = [ThiS sulfur-carrier protein]-C-terminal Gly-Gly + 2-[(2R,5Z)-2-carboxy-4-methylthiazol-5(2H)-ylidene]ethyl phosphate + 2 H2O + H(+). It functions in the pathway cofactor biosynthesis; thiamine diphosphate biosynthesis. Catalyzes the rearrangement of 1-deoxy-D-xylulose 5-phosphate (DXP) to produce the thiazole phosphate moiety of thiamine. Sulfur is provided by the thiocarboxylate moiety of the carrier protein ThiS. In vitro, sulfur can be provided by H(2)S. This Cutibacterium acnes (strain DSM 16379 / KPA171202) (Propionibacterium acnes) protein is Thiazole synthase.